Reading from the N-terminus, the 204-residue chain is uncharacterized protein (204 aa).

The N-terminal stretch at 1–17 (MKRLVTGLLALSLFLAA) is a signal peptide. The disordered stretch occupies residues 17–102 (ACGQDSDQQK…NQSSNNQKSS (86 aa)). Cys-18 carries N-palmitoyl cysteine lipidation. Cys-18 carries S-diacylglycerol cysteine lipidation. Positions 23–70 (DQQKDSNKEKDDKAKTEQQDKKTNDSSKDKKDNKDDSKDVNKDNKDNS) are enriched in basic and acidic residues. Low complexity predominate over residues 71 to 102 (ANDNQQQSNSNATNNDQNQTNNNQSSNNQKSS).

It is found in the cell membrane. This is an uncharacterized protein from Staphylococcus aureus (strain Mu50 / ATCC 700699).